A 1045-amino-acid polypeptide reads, in one-letter code: Protein phosphatase Slingshot (1045 aa).

Over residues 1-20 (MALVTVQRSPSVAGSCSNSD) the composition is skewed to polar residues. Disordered regions lie at residues 1 to 35 (MALV…GNDR), 58 to 80 (TQSE…SNNS), 143 to 194 (KVGG…DNKN), and 306 to 325 (ESRR…EKEE). Residues 66 to 80 (TDSTRSSNSTQSNNS) show a composition bias toward low complexity. The segment covering 149 to 174 (GTKSSTSPAVPTQRQLSVEQTATEAS) has biased composition (polar residues). The segment covering 175-185 (SKCDKTADKEN) has biased composition (basic and acidic residues). The 56-residue stretch at 324–379 (EETESVIKMKLKAIMMSVDLDEVTSKYIRGRLEEILDMDLGEYKSFIDAEMLVILG) folds into the DEK-C domain. Residues 383 to 524 (APTKIFEHVY…LETYSGMLDA (142 aa)) enclose the Tyrosine-protein phosphatase domain. The Phosphocysteine intermediate role is filled by cysteine 468. A compositionally biased stretch (basic and acidic residues) spans 529 to 547 (EKLQRSKSETNLKSTKDAR). Disordered stretches follow at residues 529–631 (EKLQ…PERS), 699–799 (SHLG…GDNR), and 1001–1045 (ACSA…SDSS). Polar residues predominate over residues 560 to 569 (ALNQAKSKST). Positions 586-601 (MHRRSIAQKSQRRMVR) are enriched in basic residues. Polar residues predominate over residues 602 to 625 (RSSSTSPKTQTAVVTKQQSQSMEN). Residues 704 to 713 (SVSGSSSGNI) are compositionally biased toward low complexity. Serine 719 carries the phosphoserine modification. Over residues 721-732 (CSDVFSSQVDSV) the composition is skewed to low complexity. Composition is skewed to polar residues over residues 764–774 (TPQQQKQQSNA) and 1008–1021 (KKTT…SSPV). A compositionally biased stretch (low complexity) spans 1029-1045 (SAASNSNSSASNSSDSS).

Belongs to the protein-tyrosine phosphatase family. In terms of assembly, interacts with actin.

It localises to the cytoplasm. Its subcellular location is the cytoskeleton. It catalyses the reaction O-phospho-L-tyrosyl-[protein] + H2O = L-tyrosyl-[protein] + phosphate. The enzyme catalyses O-phospho-L-seryl-[protein] + H2O = L-seryl-[protein] + phosphate. It carries out the reaction O-phospho-L-threonyl-[protein] + H2O = L-threonyl-[protein] + phosphate. Its function is as follows. Protein phosphatase which regulates actin filament dynamics. Dephosphorylates and activates the actin binding/depolymerizing factor tsr/cofilin, which subsequently binds to actin filaments and stimulates their disassembly. Required for axon growth. The protein is Protein phosphatase Slingshot (ssh) of Drosophila melanogaster (Fruit fly).